Consider the following 184-residue polypeptide: Interferon alpha-3 (184 aa).

The N-terminal stretch at 1-23 (MALPVSLLMALVVLSCHSSCSLG) is a signal peptide. 2 cysteine pairs are disulfide-bonded: cysteine 24–cysteine 122 and cysteine 52–cysteine 162.

It belongs to the alpha/beta interferon family.

Its subcellular location is the secreted. Produced by macrophages, IFN-alpha have antiviral activities. Interferon stimulates the production of two enzymes: a protein kinase and an oligoadenylate synthetase. The sequence is that of Interferon alpha-3 from Equus caballus (Horse).